The chain runs to 288 residues: ATP synthase gamma chain (288 aa).

This sequence belongs to the ATPase gamma chain family. As to quaternary structure, F-type ATPases have 2 components, CF(1) - the catalytic core - and CF(0) - the membrane proton channel. CF(1) has five subunits: alpha(3), beta(3), gamma(1), delta(1), epsilon(1). CF(0) has three main subunits: a, b and c.

The protein resides in the cell inner membrane. Its function is as follows. Produces ATP from ADP in the presence of a proton gradient across the membrane. The gamma chain is believed to be important in regulating ATPase activity and the flow of protons through the CF(0) complex. The protein is ATP synthase gamma chain of Vibrio parahaemolyticus serotype O3:K6 (strain RIMD 2210633).